Consider the following 61-residue polypeptide: Insect toxin AaHIT5 (61 aa).

In terms of domain architecture, LCN-type CS-alpha/beta spans 1 to 61; it reads DGYIKRHDGC…AWKSETNTCD (61 aa). Intrachain disulfides connect C10–C60, C14–C35, C21–C42, and C25–C44.

As to expression, expressed by the venom gland.

The protein resides in the secreted. Its function is as follows. Excitatory insect toxins induce a spastic paralysis. They bind voltage-independently to sodium channels (Nav) and shift the voltage of activation toward more negative potentials thereby affecting sodium channel activation and promoting spontaneous and repetitive firing. This toxin elicits excitatory activity with no flaccid paralysis despite its high degree of sequence similarity with other depressant insect toxins. This toxin is active only on insects. In Androctonus australis (Sahara scorpion), this protein is Insect toxin AaHIT5.